The chain runs to 154 residues: Interleukin-2 (154 aa).

Residues methionine 1–serine 20 form the signal peptide. A glycan (O-linked (GalNAc...) threonine) is linked at threonine 23. The cysteines at positions 78 and 126 are disulfide-linked.

This sequence belongs to the IL-2 family.

It localises to the secreted. Cytokine produced by activated CD4-positive helper T-cells and to a lesser extend activated CD8-positive T-cells and natural killer (NK) cells that plays pivotal roles in the immune response and tolerance. Binds to a receptor complex composed of either the high-affinity trimeric IL-2R (IL2RA/CD25, IL2RB/CD122 and IL2RG/CD132) or the low-affinity dimeric IL-2R (IL2RB and IL2RG). Interaction with the receptor leads to oligomerization and conformation changes in the IL-2R subunits resulting in downstream signaling starting with phosphorylation of JAK1 and JAK3. In turn, JAK1 and JAK3 phosphorylate the receptor to form a docking site leading to the phosphorylation of several substrates including STAT5. This process leads to activation of several pathways including STAT, phosphoinositide-3-kinase/PI3K and mitogen-activated protein kinase/MAPK pathways. Functions as a T-cell growth factor and can increase NK-cell cytolytic activity as well. Promotes strong proliferation of activated B-cells and subsequently immunoglobulin production. Plays a pivotal role in regulating the adaptive immune system by controlling the survival and proliferation of regulatory T-cells, which are required for the maintenance of immune tolerance. Moreover, participates in the differentiation and homeostasis of effector T-cell subsets, including Th1, Th2, Th17 as well as memory CD8-positive T-cells. The polypeptide is Interleukin-2 (IL2) (Papio hamadryas (Hamadryas baboon)).